A 78-amino-acid chain; its full sequence is Conotoxin Bu2 (78 aa).

The signal sequence occupies residues 1–19; it reads MKLTCVLIIAVLFLTAITA. Residues 20-41 constitute a propeptide that is removed on maturation; it reads DDSRDKQVYRAVGLIDKMRRIR. Cystine bridges form between Cys-46/Cys-59, Cys-53/Cys-64, and Cys-58/Cys-73.

It belongs to the conotoxin O1 superfamily. In terms of tissue distribution, expressed by the venom duct.

It localises to the secreted. The chain is Conotoxin Bu2 from Conus bullatus (Bubble cone).